A 478-amino-acid chain; its full sequence is PRAME family member 4 (478 aa).

Residues 99 to 126 form an LRR 1; degenerate repeat; sequence RWKLQVLDLQDVCENFWMVWSEAMAHGC. Residues 181–205 form an LRR 2; degenerate repeat; that stretch reads HLCCKKLKILGMPFRNIRSILKMVN. The stretch at 206-232 is one LRR 3; degenerate repeat; that stretch reads LDCIQEVEVNCKWVLPILTQFTPYLGH. One copy of the LRR 4; degenerate repeat lies at 233-268; it reads MRNLQKLILSHMDVSRYVSPEQKKEIVTQFTTQFLK. LRR repeat units follow at residues 269 to 294, 295 to 326, 327 to 347, 351 to 378, and 379 to 403; these read LRCL…LSCL, KTSL…SQLK, TLDL…QILL, AATL…ALSR, and CFEL…LLSH.

Belongs to the PRAME family.

In Homo sapiens (Human), this protein is PRAME family member 4.